Here is a 153-residue protein sequence, read N- to C-terminus: Ribosome maturation factor RimP (153 aa).

Belongs to the RimP family.

Its subcellular location is the cytoplasm. Required for maturation of 30S ribosomal subunits. The chain is Ribosome maturation factor RimP from Coxiella burnetii (strain CbuG_Q212) (Coxiella burnetii (strain Q212)).